Consider the following 135-residue polypeptide: Small ribosomal subunit protein uS8 (135 aa).

Belongs to the universal ribosomal protein uS8 family. As to quaternary structure, part of the 30S ribosomal subunit. Contacts proteins S5 and S12.

In terms of biological role, one of the primary rRNA binding proteins, it binds directly to 16S rRNA central domain where it helps coordinate assembly of the platform of the 30S subunit. This chain is Small ribosomal subunit protein uS8, found in Nocardioides sp. (strain ATCC BAA-499 / JS614).